The primary structure comprises 435 residues: UDP-N-acetylmuramate--L-alanine ligase (435 aa).

108 to 114 (GAHGKST) provides a ligand contact to ATP.

The protein belongs to the MurCDEF family.

It is found in the cytoplasm. The catalysed reaction is UDP-N-acetyl-alpha-D-muramate + L-alanine + ATP = UDP-N-acetyl-alpha-D-muramoyl-L-alanine + ADP + phosphate + H(+). Its pathway is cell wall biogenesis; peptidoglycan biosynthesis. In terms of biological role, cell wall formation. This is UDP-N-acetylmuramate--L-alanine ligase from Campylobacter curvus (strain 525.92).